Here is a 76-residue protein sequence, read N- to C-terminus: Large ribosomal subunit protein bL31 (76 aa).

4 residues coordinate Zn(2+): cysteine 16, cysteine 18, cysteine 37, and cysteine 40.

Belongs to the bacterial ribosomal protein bL31 family. Type A subfamily. Part of the 50S ribosomal subunit. Requires Zn(2+) as cofactor.

In terms of biological role, binds the 23S rRNA. The polypeptide is Large ribosomal subunit protein bL31 (Maridesulfovibrio salexigens (strain ATCC 14822 / DSM 2638 / NCIMB 8403 / VKM B-1763) (Desulfovibrio salexigens)).